Reading from the N-terminus, the 60-residue chain is uncharacterized protein (60 aa).

This is an uncharacterized protein from Enterobacteria phage T4 (Bacteriophage T4).